The sequence spans 386 residues: DNA replication and repair protein RecF (386 aa).

30–37 (GANAQGKT) contributes to the ATP binding site.

It belongs to the RecF family.

It is found in the cytoplasm. Its function is as follows. The RecF protein is involved in DNA metabolism; it is required for DNA replication and normal SOS inducibility. RecF binds preferentially to single-stranded, linear DNA. It also seems to bind ATP. The sequence is that of DNA replication and repair protein RecF from Natranaerobius thermophilus (strain ATCC BAA-1301 / DSM 18059 / JW/NM-WN-LF).